A 51-amino-acid polypeptide reads, in one-letter code: Large ribosomal subunit protein bL33 (51 aa).

Belongs to the bacterial ribosomal protein bL33 family.

The protein is Large ribosomal subunit protein bL33 of Alteromonas mediterranea (strain DSM 17117 / CIP 110805 / LMG 28347 / Deep ecotype).